The following is a 21-amino-acid chain: Agglutinin beta-1 chain (21 aa).

The span at 1 to 10 (NGPNGKSQSI) shows a compositional bias: polar residues. Positions 1 to 21 (NGPNGKSQSIIVGPWGDRVTN) are disordered.

This sequence belongs to the jacalin lectin family. Formed of four alpha chains and four beta chains.

In terms of biological role, D-galactose-specific lectin, binds the T-antigen structure Gal-beta1,3-GalNAc. The polypeptide is Agglutinin beta-1 chain (Maclura pomifera (Osage orange)).